The primary structure comprises 537 residues: Probable E3 ubiquitin-protein ligase ARI3 (537 aa).

The disordered stretch occupies residues 1 to 30 (MDDDYMMLDDDYGEEEDENYSEDDNYSEAE). Residues 117–331 (KTMKCDVCME…IAGHSCGRYK (215 aa)) are TRIAD supradomain. 18 residues coordinate Zn(2+): cysteine 121, cysteine 124, cysteine 139, histidine 141, cysteine 144, cysteine 147, cysteine 166, cysteine 171, cysteine 210, cysteine 216, cysteine 234, cysteine 236, cysteine 241, cysteine 244, histidine 249, cysteine 254, cysteine 281, and cysteine 284. The segment at 121–171 (CDVCMEDDLPSNVMTRMECGHRFCNDCWIGHFTVKINEGESKRILCMAHEC) adopts an RING-type 1 zinc-finger fold. Residues 190-254 (DRYDRFLIES…LSESHSPCSC (65 aa)) form an IBR-type zinc finger. The segment at 281–309 (CPKCSKPIQKRDGCNLMTCKCGQHFCWLC) adopts an RING-type 2; atypical zinc-finger fold. Residue cysteine 294 is part of the active site. Residues cysteine 299, cysteine 301, cysteine 306, cysteine 309, histidine 317, and cysteine 327 each contribute to the Zn(2+) site.

It belongs to the RBR family. Ariadne subfamily. Zn(2+) is required as a cofactor. As to expression, ubiquitous.

The enzyme catalyses [E2 ubiquitin-conjugating enzyme]-S-ubiquitinyl-L-cysteine + [acceptor protein]-L-lysine = [E2 ubiquitin-conjugating enzyme]-L-cysteine + [acceptor protein]-N(6)-ubiquitinyl-L-lysine.. Its pathway is protein modification; protein ubiquitination. In terms of biological role, might act as an E3 ubiquitin-protein ligase, or as part of E3 complex, which accepts ubiquitin from specific E2 ubiquitin-conjugating enzymes and then transfers it to substrates. The polypeptide is Probable E3 ubiquitin-protein ligase ARI3 (ARI3) (Arabidopsis thaliana (Mouse-ear cress)).